We begin with the raw amino-acid sequence, 454 residues long: MSTTDTIVAQATPPGRGGVGILRISGRGAKDVAQALLGKLPKPRYADYLPFRDAAGATLDQGIALWFPGPNSFTGEDVLELQGHGGPVILDLLLKRVLALPGMRIARPGEFSERAFLNDKLDLAQAEAIADLIDASSEQAARSAMNSLQGAFSTRIHQLVEALTHLRIYVEAAIDFPDEEIDFLSDGKIEAQLNGVMADLDSVRAEARQGSLLREGMKVVIAGRPNAGKSSLLNALAGREAAIVTDIAGTTRDVLREHIHIDGMPLHIIDTAGLREASDEVERIGIERAWNEIEQADRVLFMVDGTTTAATEPAEIWPEFMARLPHRLPITVVRNKADITGETLGMTEVNGHSLIRLSARTGEGIDLLRDHLKQSMGFTSNMEGGFLARRRHLQALEQAAQHLVEGKEQLVSAYAGELLAEELRLAQQALSEITGEFTSDDLLGRIFSSFCIGK.

Arginine 23, glutamate 80, and lysine 120 together coordinate (6S)-5-formyl-5,6,7,8-tetrahydrofolate. The 162-residue stretch at 216–377 folds into the TrmE-type G domain; the sequence is GMKVVIAGRP…LRDHLKQSMG (162 aa). Asparagine 226 serves as a coordination point for K(+). GTP is bound by residues 226–231, 245–251, 270–273, 335–338, and 358–360; these read NAGKSS, TDIAGTT, DTAG, NKAD, and SAR. Serine 230 is a binding site for Mg(2+). Residues threonine 245, isoleucine 247, and threonine 250 each contribute to the K(+) site. Threonine 251 provides a ligand contact to Mg(2+). Residue lysine 454 participates in (6S)-5-formyl-5,6,7,8-tetrahydrofolate binding.

This sequence belongs to the TRAFAC class TrmE-Era-EngA-EngB-Septin-like GTPase superfamily. TrmE GTPase family. Homodimer. Heterotetramer of two MnmE and two MnmG subunits. It depends on K(+) as a cofactor.

It is found in the cytoplasm. In terms of biological role, exhibits a very high intrinsic GTPase hydrolysis rate. Involved in the addition of a carboxymethylaminomethyl (cmnm) group at the wobble position (U34) of certain tRNAs, forming tRNA-cmnm(5)s(2)U34. This Serratia proteamaculans (strain 568) protein is tRNA modification GTPase MnmE.